The sequence spans 238 residues: 1-(5-phosphoribosyl)-5-[(5-phosphoribosylamino)methylideneamino] imidazole-4-carboxamide isomerase (238 aa).

Catalysis depends on Asp8, which acts as the Proton acceptor. Asp129 acts as the Proton donor in catalysis.

The protein belongs to the HisA/HisF family.

It localises to the cytoplasm. The enzyme catalyses 1-(5-phospho-beta-D-ribosyl)-5-[(5-phospho-beta-D-ribosylamino)methylideneamino]imidazole-4-carboxamide = 5-[(5-phospho-1-deoxy-D-ribulos-1-ylimino)methylamino]-1-(5-phospho-beta-D-ribosyl)imidazole-4-carboxamide. The protein operates within amino-acid biosynthesis; L-histidine biosynthesis; L-histidine from 5-phospho-alpha-D-ribose 1-diphosphate: step 4/9. This Clostridium novyi (strain NT) protein is 1-(5-phosphoribosyl)-5-[(5-phosphoribosylamino)methylideneamino] imidazole-4-carboxamide isomerase.